Here is a 103-residue protein sequence, read N- to C-terminus: Large ribosomal subunit protein bL21 (103 aa).

It belongs to the bacterial ribosomal protein bL21 family. As to quaternary structure, part of the 50S ribosomal subunit. Contacts protein L20.

In terms of biological role, this protein binds to 23S rRNA in the presence of protein L20. The chain is Large ribosomal subunit protein bL21 from Nitrosomonas europaea (strain ATCC 19718 / CIP 103999 / KCTC 2705 / NBRC 14298).